The sequence spans 554 residues: Zinc finger protein 426 (554 aa).

The KRAB domain occupies 42–112 (VTFDDVAVDF…QGGVLQGWEM (71 aa)). A C2H2-type 1; atypical zinc finger spans residues 146-174 (CDCEQCGEVFSEHSCLKTHVRTQSTGNTH). 11 C2H2-type zinc fingers span residues 224 to 246 (FECSHCGKSFINESYLQAHMRTH), 280 to 302 (YKCKECGKGYRYPAYLSIHMRTH), 308 to 330 (YECKECGKAFNYSNSFQIHGRTH), 336 to 358 (YVCKECGKAFTQYSGLSMHVRSH), 364 to 386 (YECKECGKSFLTSSRLIQHIRTH), 392 to 414 (FVCVECGKAFAVSSNLSGHLRTH), 420 to 442 (CECKICGKVFGYPSCLNNHMRTH), 448 to 470 (YTCKECGKAFNYSTHLKIHMRIH), 476 to 498 (YECKQCGKAFSHSSSFQIHERTH), 504 to 526 (YECKECGKAFTCSSSFRIHEKTH), and 532 to 554 (YKCQQCGKAYSHPRSLRRHEQIH).

It is found in the nucleus. Functionally, may be involved in transcriptional regulation. The protein is Zinc finger protein 426 (ZNF426) of Homo sapiens (Human).